The following is a 1352-amino-acid chain: MQPVPSDPNYGLLRSLFQDPNNQCCAECNSANVPYVCIKLGVFICPTCAHFLSTLGFKVRPIMGSSFSEEDISRLQSIGNLVSKQFWLARWTPMDIVMPPPEDPNLESFLRLKYIEKRWTSSLSTSDGFSSPNNNNTSNVNNINNNSNHNNNINNNNNNINNNNNNNINNNNNIINNFSNINNISNGMNNISLNNINNNNNNNNHYNGNDIGIPIVHKTQSQPQPQPQPQPQPQSQGFSPFNSPRSSPKPGRHHLIDDLISFNPTPVNNSNNNNNNNNNNNNGNNGNPLKFSGGIPQNNNNNNNNNTTTTTTTTNNNNKVPFDPFSPIKTFSESGEYQNTNGNQQLSGSGNSLIDILSHPTQSKSPSPSGTPHSLSPQHHSSDFKVHLIDIPTTQQQLQQQQLQLQQQLQQQLQQQQQQQQQQQQQQQSPISNPFTSNNNSNSEPLVSILDKHEDLHNHHHHQQQQHHKQQQQQQQQQQNGNNSPLAQFNQIQQQQINNNNPFVEEKQPHQHPHHLQHHRHHSTSSINHGSNGDLASISLTLLTPSPSPSPSFNYSGGVSSAPNNSLNNSCNGNNNLNNGMLNFSNLNIGGSTSSACSTNSSSNITIANNINSSNNINIINNQNNQNNNNNNNTNNVMISPSPSPNPFLPTPTSTNQNNHIITPIPVNPFTDNLQLNSNNIRQHPQQMYIQQQQQQQQQQQQQQQQQQQQQQQQQQQQLQMQQQQQQQMQQHYQQQQQQQQQQQQQQQQQQQQQQQQQQQQQQQQQQQQQQQQQQQQHINLSSSAPLQSVNHSPIPLQPQHSSSQYMNQQGYQVYPNVGNQPQSPQQIQPQPLQQQIFQQVQQQQPQIPQQSPQPLQSSTDEDQSVLEVLNLKKLFDMNMMDKEEFEHRRRQIIDNLTKTTSPIHQQPPQPPQPVLPVSAPAQVPQPHPPQQQNGPTVPQQQQQQQQQQQQQQQQQQQQQQQQQPIPQPSSSSPTPDARLTGTERVIRHRFDAKLGKWVQTATIVITEPTPFAEGAMRKAFRMKDLSAEGPSSQMVAKLFKDSNEDRMVYFKDVEMQTYSKEIAERFNLKSPPKKIDFVPAFVMELVERQGKPFCAVEYFIEGKYEKHNNNFGYKNDYDRNTPQAFSHFSYEDSGCQLIVVDIQGVGDVYTDPQIHSADGQGFGKGNLGIEGIKRFFSTHQCNPICHYLGLSSVNPKPANDESGTMPRPPSIGQSYVRPSAFPPNLQQSFSFNFPPLKDHHVLEQLNQQQQHLQQQQQQQQQQQQQQQQQQQQQQQQQQQQQQQQQQQQQQQQQNQQQNQQQNQQQQQQQQQQQQQQQNGHPPPQTPLPPTPQQKDKPKIEVFGDILRKLVS.

The Arf-GAP domain maps to 7 to 127; that stretch reads DPNYGLLRSL…RWTSSLSTSD (121 aa). The segment at 25-48 adopts a C4-type zinc-finger fold; it reads CAECNSANVPYVCIKLGVFICPTC. Disordered regions lie at residues 123-164, 219-380, 424-445, 457-484, 503-560, and 619-658; these read LSTS…NNNN, TQSQ…PQHH, QQQQ…NSEP, HNHH…GNNS, FVEE…GGVS, and IINN…TNQN. The segment covering 237–246 has biased composition (polar residues); the sequence is GFSPFNSPRS. Low complexity-rich tracts occupy residues 268-287 and 298-318; these read NNSN…NNGN and NNNN…NNNN. Polar residues-rich tracts occupy residues 329–352 and 359–379; these read KTFS…SGNS and HPTQ…SPQH. Positions 393–429 form a coiled coil; that stretch reads TTQQQLQQQQLQLQQQLQQQLQQQQQQQQQQQQQQQS. Basic residues-rich tracts occupy residues 458–470 and 510–523; these read NHHH…HHKQ and HQHP…RHHS. The segment covering 619–636 has biased composition (low complexity); sequence IINNQNNQNNNNNNNTNN. A coiled-coil region spans residues 689-781; sequence YIQQQQQQQQ…QQQQQQHINL (93 aa). Disordered regions lie at residues 786–863 and 901–979; these read PLQS…TDED and TSPI…PDAR. Residues 799 to 812 are compositionally biased toward polar residues; that stretch reads PQHSSSQYMNQQGY. The segment covering 821–859 has biased composition (low complexity); sequence QPQSPQQIQPQPLQQQIFQQVQQQQPQIPQQSPQPLQSS. Positions 906 to 915 are enriched in pro residues; the sequence is QQPPQPPQPV. Positions 931 to 965 are enriched in low complexity; it reads QQQNGPTVPQQQQQQQQQQQQQQQQQQQQQQQQQP. The Alpha-type protein kinase domain occupies 990–1194; that stretch reads RFDAKLGKWV…ICHYLGLSSV (205 aa). Position 1164–1169 (1164–1169) interacts with ATP; it reads GKGNLG. 2 disordered regions span residues 1198–1234 and 1279–1352; these read PAND…SFNF and QQQQ…KLVS. The stretch at 1241–1320 forms a coiled coil; it reads HVLEQLNQQQ…QQQQQQQQNG (80 aa). The segment covering 1279-1319 has biased composition (low complexity); the sequence is QQQQQQQQQQQQQQQQNQQQNQQQNQQQQQQQQQQQQQQQN. The segment covering 1321–1332 has biased composition (pro residues); sequence HPPPQTPLPPTP. Positions 1334-1352 are enriched in basic and acidic residues; it reads QKDKPKIEVFGDILRKLVS.

It belongs to the protein kinase superfamily. Alpha-type protein kinase family. ALPK subfamily.

This is Alpha-protein kinase 1 (ak1) from Dictyostelium discoideum (Social amoeba).